The primary structure comprises 140 residues: Large ribosomal subunit protein uL11 (140 aa).

The protein belongs to the universal ribosomal protein uL11 family. Part of the ribosomal stalk of the 50S ribosomal subunit. Interacts with L10 and the large rRNA to form the base of the stalk. L10 forms an elongated spine to which L12 dimers bind in a sequential fashion forming a multimeric L10(L12)X complex. Post-translationally, one or more lysine residues are methylated.

Functionally, forms part of the ribosomal stalk which helps the ribosome interact with GTP-bound translation factors. The sequence is that of Large ribosomal subunit protein uL11 from Thermoanaerobacter pseudethanolicus (strain ATCC 33223 / 39E) (Clostridium thermohydrosulfuricum).